The sequence spans 136 residues: Large ribosomal subunit protein uL16 (136 aa).

Belongs to the universal ribosomal protein uL16 family. As to quaternary structure, part of the 50S ribosomal subunit.

Functionally, binds 23S rRNA and is also seen to make contacts with the A and possibly P site tRNAs. This is Large ribosomal subunit protein uL16 from Psychromonas ingrahamii (strain DSM 17664 / CCUG 51855 / 37).